Reading from the N-terminus, the 350-residue chain is Phosphotriesterase-related protein (350 aa).

Residues histidine 22, histidine 24, glutamate 169, histidine 201, histidine 230, and aspartate 298 each coordinate a divalent metal cation.

The protein belongs to the metallo-dependent hydrolases superfamily. Phosphotriesterase family. A divalent metal cation is required as a cofactor.

The polypeptide is Phosphotriesterase-related protein (Drosophila pseudoobscura pseudoobscura (Fruit fly)).